The chain runs to 418 residues: Glutamyl-tRNA(Gln) amidotransferase subunit D (418 aa).

Residues 74–405 enclose the Asparaginase/glutaminase domain; the sequence is KNISILSTGG…EESKELMSKN (332 aa). Catalysis depends on residues Thr-84, Thr-160, Asp-161, and Lys-237.

The protein belongs to the asparaginase 1 family. GatD subfamily. As to quaternary structure, heterodimer of GatD and GatE.

It catalyses the reaction L-glutamyl-tRNA(Gln) + L-glutamine + ATP + H2O = L-glutaminyl-tRNA(Gln) + L-glutamate + ADP + phosphate + H(+). In terms of biological role, allows the formation of correctly charged Gln-tRNA(Gln) through the transamidation of misacylated Glu-tRNA(Gln) in organisms which lack glutaminyl-tRNA synthetase. The reaction takes place in the presence of glutamine and ATP through an activated gamma-phospho-Glu-tRNA(Gln). The GatDE system is specific for glutamate and does not act on aspartate. This Methanococcus maripaludis (strain C5 / ATCC BAA-1333) protein is Glutamyl-tRNA(Gln) amidotransferase subunit D.